Reading from the N-terminus, the 42-residue chain is Large ribosomal subunit protein bL36 (42 aa).

It belongs to the bacterial ribosomal protein bL36 family.

The protein is Large ribosomal subunit protein bL36 of Wolbachia pipientis subsp. Culex pipiens (strain wPip).